We begin with the raw amino-acid sequence, 527 residues long: Ribonuclease Y (527 aa).

The chain crosses the membrane as a helical span at residues 21–41; that stretch reads ILAIFFSFIIGIVFGGMALFV. Positions 78 to 97 are disordered; the sequence is READKTRNSAETELKERRSE. The region spanning 217 to 302 is the KH domain; the sequence is TTNVVPLPSD…EVVTKAKEEV (86 aa). Positions 343–436 constitute an HD domain; sequence VLQHSIEVAQ…VSAADAISSA (94 aa).

This sequence belongs to the RNase Y family.

It is found in the cell membrane. In terms of biological role, endoribonuclease that initiates mRNA decay. The protein is Ribonuclease Y of Dehalococcoides mccartyi (strain ATCC BAA-2100 / JCM 16839 / KCTC 5957 / BAV1).